A 206-amino-acid polypeptide reads, in one-letter code: Recombination protein RecR (206 aa).

The C4-type zinc-finger motif lies at 58-73 (CENCHNISDTKVCEIC). Positions 81–176 (QTICVVEDIR…IISTIARGIS (96 aa)) constitute a Toprim domain.

It belongs to the RecR family.

Its function is as follows. May play a role in DNA repair. It seems to be involved in an RecBC-independent recombinational process of DNA repair. It may act with RecF and RecO. This Flavobacterium johnsoniae (strain ATCC 17061 / DSM 2064 / JCM 8514 / BCRC 14874 / CCUG 350202 / NBRC 14942 / NCIMB 11054 / UW101) (Cytophaga johnsonae) protein is Recombination protein RecR.